The primary structure comprises 577 residues: Anthranilate synthase alpha subunit 1, chloroplastic (577 aa).

Residues 1-34 (MASLVLSLRIAPSTPPLGLGGGRFRGRRGAVACR) constitute a chloroplast transit peptide.

Belongs to the anthranilate synthase component I family. As to quaternary structure, heterotetramer consisting of two non-identical subunits: a beta subunit and a large alpha subunit.

The protein localises to the plastid. It localises to the chloroplast. The enzyme catalyses chorismate + L-glutamine = anthranilate + pyruvate + L-glutamate + H(+). The protein operates within amino-acid biosynthesis; L-tryptophan biosynthesis; L-tryptophan from chorismate: step 1/5. Its activity is regulated as follows. Feedback inhibition by tryptophan. Part of a heterotetrameric complex that catalyzes the two-step biosynthesis of anthranilate, an intermediate in the biosynthesis of L-tryptophan. In the first step, the glutamine-binding beta subunit of anthranilate synthase (AS) provides the glutamine amidotransferase activity which generates ammonia as a substrate that, along with chorismate, is used in the second step, catalyzed by the large alpha subunit of AS to produce anthranilate. The polypeptide is Anthranilate synthase alpha subunit 1, chloroplastic (Oryza sativa subsp. japonica (Rice)).